Here is a 1545-residue protein sequence, read N- to C-terminus: Tricalbin-3 (1545 aa).

A disordered region spans residues 1–89 (MTGIKAQVHP…SNPEGKKQSS (89 aa)). Topologically, residues 1–206 (MTGIKAQVHP…AYILENFYND (206 aa)) are cytoplasmic. The span at 62 to 80 (TKTSNSVSDVSKGQKTADS) shows a compositional bias: polar residues. Ser67 and Ser112 each carry phosphoserine. A helical transmembrane segment spans residues 207–227 (WYCNIATVLGTCFFSWLFAYI). Gly228 is a topological domain (extracellular). A helical membrane pass occupies residues 229 to 249 (FSWWSMIFIFLGTATVYNAEY). Over 250–1545 (TRFNRNIRDD…VPEVPQEYTQ (1296 aa)) the chain is Cytoplasmic. The 208-residue stretch at 272-479 (RVESTTWLNS…PPNHLDINVE (208 aa)) folds into the SMP-LTD domain. The region spanning 470–596 (PPNHLDINVE…LQNPVLDNQT (127 aa)) is the C2 1 domain. Residues 620-660 (EDKSEEKAVERAEAKAKGKKEDENEDTTEKEEDENEESSQT) adopt a coiled-coil conformation. Residues 624 to 641 (EEKAVERAEAKAKGKKED) are compositionally biased toward basic and acidic residues. Positions 624-660 (EEKAVERAEAKAKGKKEDENEDTTEKEEDENEESSQT) are disordered. The span at 642 to 658 (ENEDTTEKEEDENEESS) shows a compositional bias: acidic residues. C2 domains lie at 646–763 (TTEK…AQEF) and 783–897 (MTGA…SGKY). A coiled-coil region spans residues 937–972 (SPEELVNVEKLEKELKEKKKKFEATQEENEQEMEKN). One can recognise a C2 4 domain in the interval 1119–1234 (PTSVKLPSSE…EVGKTYNWNL (116 aa)). Residues Asp1150, Asp1156, Asp1204, Asp1206, and Asp1212 each coordinate Ca(2+). A disordered region spans residues 1304-1404 (LLKSLGGNPM…NSRGHSRASS (101 aa)). A compositionally biased stretch (polar residues) spans 1318 to 1328 (SSNGNESNGAK). Residues 1329 to 1340 (KSSEKKSFDRRS) are compositionally biased toward basic and acidic residues. Ser1340, Ser1342, and Ser1346 each carry phosphoserine. A compositionally biased stretch (polar residues) spans 1341 to 1351 (PSNLNSTSVTP). Residue Thr1350 is modified to Phosphothreonine. A Phosphoserine modification is found at Ser1354. Over residues 1361–1373 (VPNTSYAPVQSAS) the composition is skewed to polar residues. Low complexity predominate over residues 1377–1404 (KPTDNTSSSSNKKDTPSSNSRGHSRASS). Residues 1396–1514 (SRGHSRASSF…QQDGQISVKL (119 aa)) form the C2 5 domain. Ser1400 carries the post-translational modification Phosphoserine.

This sequence belongs to the tricalbin family. Interacts with TCB2 via its C-terminal domain. Ca(2+) serves as cofactor.

The protein resides in the cell membrane. The protein localises to the endoplasmic reticulum membrane. Functionally, may play a role in membrane trafficking. This is Tricalbin-3 (TCB3) from Saccharomyces cerevisiae (strain ATCC 204508 / S288c) (Baker's yeast).